A 115-amino-acid chain; its full sequence is NADH-ubiquinone oxidoreductase chain 3 (115 aa).

The next 3 helical transmembrane spans lie at 4 to 24 (LVTM…AFWL), 55 to 75 (FFLV…LLPM), and 86 to 106 (TMTL…AYEW).

Belongs to the complex I subunit 3 family. As to quaternary structure, core subunit of respiratory chain NADH dehydrogenase (Complex I) which is composed of 45 different subunits. Interacts with TMEM186. Interacts with TMEM242.

Its subcellular location is the mitochondrion inner membrane. The enzyme catalyses a ubiquinone + NADH + 5 H(+)(in) = a ubiquinol + NAD(+) + 4 H(+)(out). Functionally, core subunit of the mitochondrial membrane respiratory chain NADH dehydrogenase (Complex I) which catalyzes electron transfer from NADH through the respiratory chain, using ubiquinone as an electron acceptor. Essential for the catalytic activity of complex I. In Nelsonia neotomodon (Diminutive woodrat), this protein is NADH-ubiquinone oxidoreductase chain 3.